The primary structure comprises 368 residues: Chaperone protein DnaJ (368 aa).

The region spanning 5-75 is the J domain; sequence DFYKILGVEK…TKRKQYDKFG (71 aa). Residues 139-222 form a CR-type zinc finger; it reads GKEISQKLTK…CRGKTIVETK (84 aa). Residues cysteine 152, cysteine 155, cysteine 169, cysteine 172, cysteine 196, cysteine 199, cysteine 210, and cysteine 213 each contribute to the Zn(2+) site. CXXCXGXG motif repeat units follow at residues 152 to 159, 169 to 176, 196 to 203, and 210 to 217; these read CDNCKGSG, CYNCQGRG, CSVCLGSG, and CKKCRGKT.

It belongs to the DnaJ family. As to quaternary structure, homodimer. Zn(2+) serves as cofactor.

It is found in the cytoplasm. Participates actively in the response to hyperosmotic and heat shock by preventing the aggregation of stress-denatured proteins and by disaggregating proteins, also in an autonomous, DnaK-independent fashion. Unfolded proteins bind initially to DnaJ; upon interaction with the DnaJ-bound protein, DnaK hydrolyzes its bound ATP, resulting in the formation of a stable complex. GrpE releases ADP from DnaK; ATP binding to DnaK triggers the release of the substrate protein, thus completing the reaction cycle. Several rounds of ATP-dependent interactions between DnaJ, DnaK and GrpE are required for fully efficient folding. Also involved, together with DnaK and GrpE, in the DNA replication of plasmids through activation of initiation proteins. This chain is Chaperone protein DnaJ, found in Mesomycoplasma hyopneumoniae (strain 232) (Mycoplasma hyopneumoniae).